A 102-amino-acid chain; its full sequence is MRIAIVGGQNHNQETYGKLLGKTGRVEIHFYDGIPKKHNKRNLEKLIKDVDLVIVILGACSHASMWDTKKAAKKCHKEVLFSRGIGISSIVKQIAGKLAYTA.

The protein belongs to the UPF0751 family.

The sequence is that of UPF0751 protein DSY4013 from Desulfitobacterium hafniense (strain Y51).